Reading from the N-terminus, the 213-residue chain is Sclerostin (213 aa).

Positions 1 to 23 (MQLPLALCLVCLLVHTAFRVVEG) are cleaved as a signal peptide. Residues 41-71 (GEYPEPPPELENNKTMNRAENGGRPPHHPFE) form a disordered region. Asn-53 carries N-linked (GlcNAc...) asparagine glycosylation. 4 disulfide bridges follow: Cys-80-Cys-134, Cys-94-Cys-148, Cys-105-Cys-165, and Cys-109-Cys-167. The CTCK domain maps to 82–172 (ELHFTRYVTD…ASCKCKRLTR (91 aa)). N-linked (GlcNAc...) asparagine glycosylation is present at Asn-175. The interval 178 to 213 (ELKDFGTEAARPQKGRKPRPRARSAKANQAELENAY) is disordered. Over residues 190–201 (QKGRKPRPRARS) the composition is skewed to basic residues.

The protein belongs to the sclerostin family. In terms of assembly, interacts with LRP4 (via the extracellular domain); the interaction facilitates the inhibition of Wnt signaling. Interacts with LRP5 (via the first two YWTD-EGF repeat domains); the interaction inhibits Wnt-mediated signaling. Interacts with LRP6. As to expression, widely expressed at low levels with highest levels in bone, cartilage, kidney, liver, bone marrow and primary osteoblasts differentiated for 21 days. Detected in the subendothelial layer of the aortic intima (at protein level).

Its subcellular location is the secreted. The protein localises to the extracellular space. It localises to the extracellular matrix. Negative regulator of bone growth that acts through inhibition of Wnt signaling and bone formation. The sequence is that of Sclerostin from Homo sapiens (Human).